Here is a 209-residue protein sequence, read N- to C-terminus: Ribose 1,5-bisphosphate phosphokinase PhnN (209 aa).

Residue 27 to 34 participates in ATP binding; it reads GPSGGGKD.

It belongs to the ribose 1,5-bisphosphokinase family.

It carries out the reaction alpha-D-ribose 1,5-bisphosphate + ATP = 5-phospho-alpha-D-ribose 1-diphosphate + ADP. Its pathway is metabolic intermediate biosynthesis; 5-phospho-alpha-D-ribose 1-diphosphate biosynthesis; 5-phospho-alpha-D-ribose 1-diphosphate from D-ribose 5-phosphate (route II): step 3/3. In terms of biological role, catalyzes the phosphorylation of ribose 1,5-bisphosphate to 5-phospho-D-ribosyl alpha-1-diphosphate (PRPP). The polypeptide is Ribose 1,5-bisphosphate phosphokinase PhnN (Chelativorans sp. (strain BNC1)).